Consider the following 530-residue polypeptide: Cytochrome P450 monooxygenase apf7 (530 aa).

The chain crosses the membrane as a helical span at residues 6–26 (VSPVSIWVFVIYAVTIIIAIY). Residue Asn85 is glycosylated (N-linked (GlcNAc...) asparagine). A heme-binding site is contributed by Cys464.

Belongs to the cytochrome P450 family. Heme serves as cofactor.

The protein localises to the membrane. The protein operates within secondary metabolite biosynthesis. Its function is as follows. Cytochrome P450 monooxygenase; part of the gene cluster that mediates the biosynthesis of the cyclic tetrapeptide apicidin F (APF). The non-ribosomal peptide synthetase apf1 incorporates four different amino acids to produce apicidin F: L-phenylalanine, D-pipecolic acid (D-pip), N-methoxy-L-tryptophan and L-2-aminooctanedioic acid. L-Phenylalanine is the only proteinogenic amino acid directly used by apf1. The 3 other apf1 substrates are non-proteinogenic and have to be modified by other enzymes of the cluster. Lysine is converted to delta-1-pyrroline-5-carboxylate (P5C) which is reduced to L-pipecolic acid (L-pip) by apf3. L-pip is epimerized to D-pip, probably by apf1 activity, prior to incorporation. L-Tryptophan is N-oxidyzed by one of the cytochrome P450 monooxygenases (apf7 or apf8), and further methylated at the hydroxy group by the O-methyltransferase apf6 to yield N-methoxy-L-tryptophan. The synthesis of the fourth apf1 substrate is more complex. The fatty acid synthase apf5 is involved in the synthesis of the octanoic acid backbone of L-2-aminooctanedioic acid by fixing one acetyl-CoA unit and three malonyl-CoA units. Then one of the cytochrome P450 monooxygenases (apf7 or apf8) may oxidize this backbone to 2-oxooctanoic acid. The aminotransferase apf4 is predicted to catalyze the exchange of the keto group with an amino group. The next step would be the oxidation of 2-aminooctanoic acid by one of the cytochrome P450 monooxygenases (apf7 or apf8). The last step is the oxidation of 2-amino-8-hydroxyoctanoic acid to 2-aminooctanedioic acid is catalyzed by the FAD-dependent monooxygenase apf9. This Gibberella fujikuroi (strain CBS 195.34 / IMI 58289 / NRRL A-6831) (Bakanae and foot rot disease fungus) protein is Cytochrome P450 monooxygenase apf7.